A 371-amino-acid chain; its full sequence is Dual-specificity RNA methyltransferase RlmN (371 aa).

E97 (proton acceptor) is an active-site residue. The Radical SAM core domain occupies 103–341 (DGDRATLCVS…VTVRTTRGDD (239 aa)). A disulfide bridge connects residues C110 and C346. Residues C117, C121, and C124 each contribute to the [4Fe-4S] cluster site. Residues 171-172 (GE), S203, 225-227 (SLH), and N303 each bind S-adenosyl-L-methionine. The active-site S-methylcysteine intermediate is the C346.

This sequence belongs to the radical SAM superfamily. RlmN family. The cofactor is [4Fe-4S] cluster.

It is found in the cytoplasm. It catalyses the reaction adenosine(2503) in 23S rRNA + 2 reduced [2Fe-2S]-[ferredoxin] + 2 S-adenosyl-L-methionine = 2-methyladenosine(2503) in 23S rRNA + 5'-deoxyadenosine + L-methionine + 2 oxidized [2Fe-2S]-[ferredoxin] + S-adenosyl-L-homocysteine. It carries out the reaction adenosine(37) in tRNA + 2 reduced [2Fe-2S]-[ferredoxin] + 2 S-adenosyl-L-methionine = 2-methyladenosine(37) in tRNA + 5'-deoxyadenosine + L-methionine + 2 oxidized [2Fe-2S]-[ferredoxin] + S-adenosyl-L-homocysteine. In terms of biological role, specifically methylates position 2 of adenine 2503 in 23S rRNA and position 2 of adenine 37 in tRNAs. m2A2503 modification seems to play a crucial role in the proofreading step occurring at the peptidyl transferase center and thus would serve to optimize ribosomal fidelity. This Marinomonas sp. (strain MWYL1) protein is Dual-specificity RNA methyltransferase RlmN.